Reading from the N-terminus, the 163-residue chain is Anthranilate 1,2-dioxygenase small subunit (163 aa).

This sequence belongs to the bacterial ring-hydroxylating dioxygenase beta subunit family. In terms of assembly, the anthranilate dioxygenase (AntDO) multicomponent enzyme system is composed of an oxygenase component and a NADH:acceptor reductase component (AntC). The oxygenase component is a heterohexamer of 3 large (AntA) and 3 small (AntB) subunits.

The enzyme catalyses anthranilate + NADH + O2 + 3 H(+) = catechol + NH4(+) + CO2 + NAD(+). The catalysed reaction is anthranilate + NADPH + O2 + 3 H(+) = catechol + NH4(+) + CO2 + NADP(+). Its pathway is aromatic compound metabolism; anthranilate degradation via hydroxylation; catechol from anthranilate: step 1/1. In terms of biological role, component of anthranilate dioxygenase multicomponent enzyme system which catalyzes the incorporation of both atoms of molecular oxygen into anthranilate to form catechol. The protein is Anthranilate 1,2-dioxygenase small subunit of Acinetobacter baylyi (strain ATCC 33305 / BD413 / ADP1).